The primary structure comprises 85 residues: Probable [Fe-S]-dependent transcriptional repressor (85 aa).

Iron-sulfur cluster contacts are provided by Cys56, Cys61, Cys64, and Cys71.

The protein belongs to the FeoC family.

Its function is as follows. May function as a transcriptional regulator that controls feoABC expression. This chain is Probable [Fe-S]-dependent transcriptional repressor, found in Yersinia pseudotuberculosis serotype O:1b (strain IP 31758).